The sequence spans 94 residues: MIKSELVQKIAEANPHLYQRDVENIVNAILDQIVDALAQGDRVELRGFGAFSVKQREARTGRNPRTGKQVDVSSKVVPYFKTGKEMRERLNGAA.

The protein belongs to the bacterial histone-like protein family. In terms of assembly, heterodimer of an alpha and a beta chain.

Functionally, this protein is one of the two subunits of integration host factor, a specific DNA-binding protein that functions in genetic recombination as well as in transcriptional and translational control. The chain is Integration host factor subunit beta from Azorhizobium caulinodans (strain ATCC 43989 / DSM 5975 / JCM 20966 / LMG 6465 / NBRC 14845 / NCIMB 13405 / ORS 571).